The following is a 423-amino-acid chain: Pseudouridylate synthase 1 homolog (423 aa).

The interval 32 to 75 (AGNKVPPALASHQPDRKGRGGWVWEETEHPAKRVKGGEDEEPPR) is disordered. A compositionally biased stretch (basic and acidic residues) spans 57-68 (ETEHPAKRVKGG). Asp142 acts as the Nucleophile in catalysis. Residues 403–423 (ADTGAKVPSSLEGSEGDGDTD) form a disordered region. Residues Ser411 and Ser416 each carry the phosphoserine modification. The residue at position 422 (Thr422) is a Phosphothreonine.

This sequence belongs to the tRNA pseudouridine synthase TruA family. Monomer. Forms a complex with RARG and the SRA1 RNA in the nucleus.

Its subcellular location is the nucleus. The protein resides in the cytoplasm. The protein localises to the mitochondrion. The catalysed reaction is a uridine in tRNA = a pseudouridine in tRNA. It catalyses the reaction uridine(38/39/40) in tRNA = pseudouridine(38/39/40) in tRNA. The enzyme catalyses a uridine in mRNA = a pseudouridine in mRNA. Its function is as follows. Pseudouridylate synthase that catalyzes pseudouridylation of tRNAs and mRNAs. Acts on positions 27/28 in the anticodon stem and also positions 34 and 36 in the anticodon of an intron containing tRNA. Also catalyzes pseudouridylation of mRNAs: mediates pseudouridylation of mRNAs with the consensus sequence 5'-UGUAG-3'. Acts as a regulator of pre-mRNA splicing by mediating pseudouridylation of pre-mRNAs at locations associated with alternatively spliced regions. Pseudouridylation of pre-mRNAs near splice sites directly regulates mRNA splicing and mRNA 3'-end processing. Involved in regulation of nuclear receptor activity through pseudouridylation of SRA1 mRNA. Does not form pseudouridine when expressed in vitro. The chain is Pseudouridylate synthase 1 homolog from Mus musculus (Mouse).